Here is a 338-residue protein sequence, read N- to C-terminus: Ferredoxin--NADP reductase (338 aa).

Asp35, Gln43, Tyr48, Ala88, Phe122, Asp289, and Thr330 together coordinate FAD.

This sequence belongs to the ferredoxin--NADP reductase type 2 family. In terms of assembly, homodimer. It depends on FAD as a cofactor.

It carries out the reaction 2 reduced [2Fe-2S]-[ferredoxin] + NADP(+) + H(+) = 2 oxidized [2Fe-2S]-[ferredoxin] + NADPH. This Ehrlichia chaffeensis (strain ATCC CRL-10679 / Arkansas) protein is Ferredoxin--NADP reductase.